Here is a 475-residue protein sequence, read N- to C-terminus: Ribulose bisphosphate carboxylase large chain (475 aa).

A propeptide spanning residues 1–2 (MS) is cleaved from the precursor. Pro3 carries the post-translational modification N-acetylproline. Position 14 is an N6,N6,N6-trimethyllysine (Lys14). Substrate is bound by residues Asn123 and Thr173. Catalysis depends on Lys175, which acts as the Proton acceptor. Lys177 is a binding site for substrate. Positions 201, 203, and 204 each coordinate Mg(2+). An N6-carboxylysine modification is found at Lys201. The active-site Proton acceptor is the His294. Substrate is bound by residues Arg295, His327, and Ser379.

It belongs to the RuBisCO large chain family. Type I subfamily. In terms of assembly, heterohexadecamer of 8 large chains and 8 small chains; disulfide-linked. The disulfide link is formed within the large subunit homodimers. It depends on Mg(2+) as a cofactor. In terms of processing, the disulfide bond which can form in the large chain dimeric partners within the hexadecamer appears to be associated with oxidative stress and protein turnover.

The protein resides in the plastid. It localises to the chloroplast. It catalyses the reaction 2 (2R)-3-phosphoglycerate + 2 H(+) = D-ribulose 1,5-bisphosphate + CO2 + H2O. The catalysed reaction is D-ribulose 1,5-bisphosphate + O2 = 2-phosphoglycolate + (2R)-3-phosphoglycerate + 2 H(+). RuBisCO catalyzes two reactions: the carboxylation of D-ribulose 1,5-bisphosphate, the primary event in carbon dioxide fixation, as well as the oxidative fragmentation of the pentose substrate in the photorespiration process. Both reactions occur simultaneously and in competition at the same active site. The polypeptide is Ribulose bisphosphate carboxylase large chain (Chlorokybus atmophyticus (Soil alga)).